The primary structure comprises 655 residues: Import motor subunit, mitochondrial (655 aa).

The transit peptide at 1–23 directs the protein to the mitochondrion; sequence MLAAKNILNRSSLSSSFRIATRL. Thr-330 carries the phosphothreonine modification. Residues 629–655 form a disordered region; that stretch reads EQLYKNDSNNNNNNNNGNNAESDETKQ. Positions 637–647 are enriched in low complexity; sequence NNNNNNNNGNN.

It belongs to the heat shock protein 70 family. As to quaternary structure, component of the PAM complex, at least composed of SSC1 (mtHsp70), MGE1, TIM44, PAM16/TIM16, PAM17 and PAM18/TIM14. In the complex, SSC1 interacts directly with PAM18 and TIM44. Interacts with NAP1. Component of endonuclease SceI (endo.SceI), which is a heterodimer of ENS2 and SSC1.

The protein resides in the mitochondrion matrix. It catalyses the reaction ATP + H2O = ADP + phosphate + H(+). In terms of biological role, essential component of the PAM complex, a complex required for the translocation of transit peptide-containing proteins from the inner membrane into the mitochondrial matrix in an ATP-dependent manner. Constitutes the ATP-driven core of the motor and binds the precursor preprotein. Required for the import of the processed frataxin homolog YFH1 into the mitochondrion. Acts as a non-catalytic component of endonuclease SceI (endo.SceI), which cleaves specifically at multiple sites on mitochondrial DNA and produces double-stranded breaks. SSC1 confers broader sequence specificity, greater stability, and higher activity on the catalytic subunit. This chain is Import motor subunit, mitochondrial, found in Saccharomyces cerevisiae (Baker's yeast).